The sequence spans 216 residues: Uracil phosphoribosyltransferase (216 aa).

GTP is bound at residue 30–34 (KNLVK). 5-phospho-alpha-D-ribose 1-diphosphate-binding positions include R80, R105, and 140–148 (DPMIATGST). Uracil-binding positions include I203 and 208 to 210 (GDA). Position 209 (D209) interacts with 5-phospho-alpha-D-ribose 1-diphosphate.

Belongs to the UPRTase family. It depends on Mg(2+) as a cofactor.

It catalyses the reaction UMP + diphosphate = 5-phospho-alpha-D-ribose 1-diphosphate + uracil. The protein operates within pyrimidine metabolism; UMP biosynthesis via salvage pathway; UMP from uracil: step 1/1. Its activity is regulated as follows. Allosterically activated by GTP. Functionally, catalyzes the conversion of uracil and 5-phospho-alpha-D-ribose 1-diphosphate (PRPP) to UMP and diphosphate. This Sulfolobus acidocaldarius (strain ATCC 33909 / DSM 639 / JCM 8929 / NBRC 15157 / NCIMB 11770) protein is Uracil phosphoribosyltransferase.